Consider the following 158-residue polypeptide: Encapsulin nanocompartment cargo protein EncB (158 aa).

Fe cation-binding residues include Glu-22, Glu-52, and His-55. 2 short sequence motifs (di-iron-binding motif) span residues 52–55 (EKEH) and 58–61 (EAVH). Residues 92–158 (ATVHVPTPDG…RGGGGSGSGR (67 aa)) are disordered. Residues 142–149 (LTVGSLRR) are probable targeting peptide. Over residues 148–158 (RRGGGGSGSGR) the composition is skewed to gly residues.

Belongs to the ferritin-like superfamily.

The protein resides in the encapsulin nanocompartment. In terms of biological role, cargo protein of a type 1 encapsulin nanocompartment. May help nucleate Fe atoms in the interior of the encapsulin nanocompartment. Present in about 36 copies/encapsulin nanocompartment. The sequence is that of Encapsulin nanocompartment cargo protein EncB from Myxococcus xanthus (strain DK1622).